The chain runs to 218 residues: Cytidylate kinase (218 aa).

7–15 (GPSASGKSS) serves as a coordination point for ATP.

It belongs to the cytidylate kinase family. Type 1 subfamily.

It localises to the cytoplasm. It carries out the reaction CMP + ATP = CDP + ADP. It catalyses the reaction dCMP + ATP = dCDP + ADP. The polypeptide is Cytidylate kinase (Borrelia duttonii (strain Ly)).